Consider the following 546-residue polypeptide: Hexose transporter HXT10 (546 aa).

Residues 1–44 (MVSSSVSILGTSAKASTSLSRKDEIKLTPETREASLDIPYKPII) lie on the Cytoplasmic side of the membrane. Residues 45-65 (AYWTVMGLCLMIAFGGFIFGW) traverse the membrane as a helical segment. Residues 66-100 (DTGTISGFINQTDFKRRFGELQRDGSFQLSDVRTG) lie on the Extracellular side of the membrane. The N-linked (GlcNAc...) asparagine glycan is linked to Asn75. Residues 101–121 (LIVGIFNIGCALGGLTLGRLG) form a helical membrane-spanning segment. The Cytoplasmic portion of the chain corresponds to 122 to 127 (DIYGRK). Residues 128–148 (IGLMCVILVYVVGIVIQIASS) traverse the membrane as a helical segment. The Extracellular segment spans residues 149 to 158 (DKWYQYFIGR). The helical transmembrane segment at 159–179 (IVSGMGVGGVAVLSPTLISEI) threads the bilayer. Over 180–185 (SPKHLR) the chain is Cytoplasmic. A helical transmembrane segment spans residues 186–206 (GTCVSFYQLMITLGIFLGYCT). Residues 207–220 (NYGTKKYSNSIQWR) lie on the Extracellular side of the membrane. Residues 221 to 241 (VPLGLCFAWAIFMVIGMVMVP) form a helical membrane-spanning segment. Residues 242-324 (ESPRYLVEKG…IQSLQQLTGC (83 aa)) are Cytoplasmic-facing. A helical membrane pass occupies residues 325 to 341 (NYFFYYGTTIFNAVGMQ). Topologically, residues 342–347 (DSFETS) are extracellular. A helical membrane pass occupies residues 348-365 (IVLGAVNFASTFVALYIV). The Cytoplasmic segment spans residues 366-372 (DKFGRRK). A helical transmembrane segment spans residues 373–393 (CLLWGSASMAICFVIFATVGV). Residues 394–415 (TRLWPQGKDQPSSQSAGNVMIV) are Extracellular-facing. The chain crosses the membrane as a helical span at residues 416-436 (FTCFFIFSFAITWAPIAYVIV). Residues 437 to 453 (AETYPLRVKNRAMAIAV) lie on the Cytoplasmic side of the membrane. Residues 454 to 474 (GANWMWGFLIGFFTPFITRSI) form a helical membrane-spanning segment. Gly475 is a topological domain (extracellular). A helical transmembrane segment spans residues 476-496 (FSYGYVFMGCLIFSYFYVFFF). Residues 497–546 (VCETKGLTLEEVNEMYEERIKPWKSGGWIPSSRRTPQPTSSTPLVIVDSK) are Cytoplasmic-facing.

This sequence belongs to the major facilitator superfamily. Sugar transporter (TC 2.A.1.1) family.

The protein localises to the membrane. Its function is as follows. Probable glucose transporter. In Saccharomyces cerevisiae (strain ATCC 204508 / S288c) (Baker's yeast), this protein is Hexose transporter HXT10 (HXT10).